Here is a 247-residue protein sequence, read N- to C-terminus: tRNA pseudouridine synthase A (247 aa).

The Nucleophile role is filled by aspartate 53. Tyrosine 111 serves as a coordination point for substrate.

Belongs to the tRNA pseudouridine synthase TruA family. As to quaternary structure, homodimer.

The catalysed reaction is uridine(38/39/40) in tRNA = pseudouridine(38/39/40) in tRNA. In terms of biological role, formation of pseudouridine at positions 38, 39 and 40 in the anticodon stem and loop of transfer RNAs. The polypeptide is tRNA pseudouridine synthase A (Bacillus subtilis (strain 168)).